The primary structure comprises 346 residues: Insertion element IS476 uncharacterized 39.2 kDa protein (346 aa).

The disordered stretch occupies residues 1 to 50 (MVSARPAFISGGPSTGGWRPTRQAAERTGGPEHSIEEVAGRGAPGHRSAE). Residues 29–39 (GGPEHSIEEVA) are compositionally biased toward basic and acidic residues. Residues 169 to 329 (ASSMPNDTWS…IPPAQFAANY (161 aa)) form the Integrase catalytic domain.

This chain is Insertion element IS476 uncharacterized 39.2 kDa protein, found in Xanthomonas euvesicatoria.